Consider the following 399-residue polypeptide: S-adenosylmethionine synthase (399 aa).

Residue His17 participates in ATP binding. A Mg(2+)-binding site is contributed by Asp19. Glu45 lines the K(+) pocket. Positions 58 and 101 each coordinate L-methionine. Residues 101–111 are flexible loop; that stretch reads QSADIAMGVDQ. ATP is bound by residues 177–179, 244–245, Asp253, 259–260, Ala276, and Lys280; these read DGK, RF, and RK. Asp253 contributes to the L-methionine binding site. Residue Lys284 coordinates L-methionine.

This sequence belongs to the AdoMet synthase family. In terms of assembly, homotetramer; dimer of dimers. It depends on Mg(2+) as a cofactor. Requires K(+) as cofactor.

Its subcellular location is the cytoplasm. The enzyme catalyses L-methionine + ATP + H2O = S-adenosyl-L-methionine + phosphate + diphosphate. Its pathway is amino-acid biosynthesis; S-adenosyl-L-methionine biosynthesis; S-adenosyl-L-methionine from L-methionine: step 1/1. Functionally, catalyzes the formation of S-adenosylmethionine (AdoMet) from methionine and ATP. The overall synthetic reaction is composed of two sequential steps, AdoMet formation and the subsequent tripolyphosphate hydrolysis which occurs prior to release of AdoMet from the enzyme. The sequence is that of S-adenosylmethionine synthase from Bacillus cereus (strain B4264).